The following is a 100-amino-acid chain: MVRYHVRSPSERPHREYRQLVNGQEQGRHGQEEQGMSAEGVEGYGRTHQGCYGYRRRLCSRRRLYRVHRRQRRSCRRRCCRYRRRNRRGCRTRRRTCRRH.

A disordered region spans residues 1 to 45 (MVRYHVRSPSERPHREYRQLVNGQEQGRHGQEEQGMSAEGVEGYG). 3 positions are modified to phosphoserine: serine 8, serine 10, and serine 37. Residues 8–18 (SPSERPHREYR) show a composition bias toward basic and acidic residues.

Belongs to the protamine P2 family. As to quaternary structure, interacts with TDRP. In terms of processing, proteolytic processing into mature chains is required for histone eviction during spermatogenesis. Transition proteins (TNP1 and TNP2) are required for processing. Testis.

It localises to the nucleus. Its subcellular location is the chromosome. Its function is as follows. Protamines substitute for histones in the chromatin of sperm during the haploid phase of spermatogenesis. They compact sperm DNA into a highly condensed, stable and inactive complex. The sequence is that of Protamine-2 (PRM2) from Alouatta seniculus (Red howler monkey).